The following is a 436-amino-acid chain: 3-ketoacyl-CoA thiolase (436 aa).

Residue cysteine 99 is the Acyl-thioester intermediate of the active site. Residues histidine 392 and cysteine 422 each act as proton acceptor in the active site.

Belongs to the thiolase-like superfamily. Thiolase family. Heterotetramer of two alpha chains (FadJ) and two beta chains (FadI).

The protein resides in the cytoplasm. The catalysed reaction is an acyl-CoA + acetyl-CoA = a 3-oxoacyl-CoA + CoA. Its pathway is lipid metabolism; fatty acid beta-oxidation. Its function is as follows. Catalyzes the final step of fatty acid oxidation in which acetyl-CoA is released and the CoA ester of a fatty acid two carbons shorter is formed. This Escherichia coli O127:H6 (strain E2348/69 / EPEC) protein is 3-ketoacyl-CoA thiolase.